Reading from the N-terminus, the 598-residue chain is IQ calmodulin-binding motif-containing protein 1 (598 aa).

Residues 1–157 (MKPTGTDPRI…SLFWLLGGHV (157 aa)) are interaction with BBS1, BBS8 and BBS9. Residues 287 to 598 (QEVEEQKLHQ…NLFIGGTKPP (312 aa)) are interaction with CEP290, BBS1, BBS2, BBS4, BBS5, BBS7, BBS8 and BBS9. 4 IQ domains span residues 294 to 317 (LHQA…LKKL), 318 to 338 (PSAV…MLLE), 387 to 416 (EEKS…SLIE), and 417 to 437 (YKAA…CRKK). A coiled-coil region spans residues 336-373 (LLEINRQKEEEDLKLQLQLQRQRAMRLSRELQLSMLEI). Residues 530–598 (AEGKEPELFL…NLFIGGTKPP (69 aa)) are interaction with BBS1, BBS2, BBS4, BBS7, BBS8 and BBS9. Phosphoserine is present on S572.

Interacts with CEP290/NPHP6; IQCB1/NPHP5 and CEP290 are proposed to form a functional NPHP5-6 module/NPHP6; localized to the centrosome. Interacts with calmodulin, ATXN10. Interacts with NPHP1, INVS, NPHP4 and RPGRIP1L; these interactions likely require additional interactors. Associates with the BBSome complex; interacts with BBS1, BBS2, BBS4, BBS5, BBS7, BBS8 and BBS9. As to expression, ubiquitously expressed in fetal and adult tissues. Localized to the outer segments and connecting cilia of photoreceptor cells. Up-regulated in a number of primary colorectal and gastric tumors.

The protein resides in the cytoplasm. Its subcellular location is the cytoskeleton. It is found in the microtubule organizing center. It localises to the centrosome. The protein localises to the centriole. Its function is as follows. Involved in ciliogenesis. The function in an early step in cilia formation depends on its association with CEP290/NPHP6. Involved in regulation of the BBSome complex integrity, specifically for presence of BBS2 and BBS5 in the complex, and in ciliary targeting of selected BBSome cargos. May play a role in controlling entry of the BBSome complex to cilia possibly implicating CEP290/NPHP6. In Homo sapiens (Human), this protein is IQ calmodulin-binding motif-containing protein 1 (IQCB1).